The following is a 221-amino-acid chain: Dynein light chain Tctex-type 4 (221 aa).

2 disordered regions span residues 1–52 (MASR…SRRG) and 65–87 (NSLVGPGAGPGGQRPSLGPVPPL). A compositionally biased stretch (basic and acidic residues) spans 10-21 (RQEEENAKDSGR). A Phosphoserine modification is found at S66.

It belongs to the dynein light chain Tctex-type family. Interacts with ENG/endoglin, TGFBR2 and TGFBR3. Interacts with PPP1CC. In terms of tissue distribution, ubiquitously expressed. Expressed in testis (at protein level).

Its subcellular location is the cell projection. It is found in the cilium. It localises to the flagellum. The protein resides in the cytoplasmic vesicle. The protein localises to the secretory vesicle. Its subcellular location is the acrosome. It is found in the cytoplasm. It localises to the cytoskeleton. The protein resides in the cilium axoneme. The protein localises to the nucleus. Its subcellular location is the microtubule organizing center. The protein is Dynein light chain Tctex-type 4 of Homo sapiens (Human).